We begin with the raw amino-acid sequence, 194 residues long: Imidazoleglycerol-phosphate dehydratase (194 aa).

It belongs to the imidazoleglycerol-phosphate dehydratase family.

The protein resides in the cytoplasm. The catalysed reaction is D-erythro-1-(imidazol-4-yl)glycerol 3-phosphate = 3-(imidazol-4-yl)-2-oxopropyl phosphate + H2O. The protein operates within amino-acid biosynthesis; L-histidine biosynthesis; L-histidine from 5-phospho-alpha-D-ribose 1-diphosphate: step 6/9. This Lacticaseibacillus paracasei (strain ATCC 334 / BCRC 17002 / CCUG 31169 / CIP 107868 / KCTC 3260 / NRRL B-441) (Lactobacillus paracasei) protein is Imidazoleglycerol-phosphate dehydratase.